Reading from the N-terminus, the 468-residue chain is ATP synthase subunit beta (468 aa).

155–162 serves as a coordination point for ATP; the sequence is GGAGVGKT.

Belongs to the ATPase alpha/beta chains family. As to quaternary structure, F-type ATPases have 2 components, CF(1) - the catalytic core - and CF(0) - the membrane proton channel. CF(1) has five subunits: alpha(3), beta(3), gamma(1), delta(1), epsilon(1). CF(0) has three main subunits: a(1), b(2) and c(9-12). The alpha and beta chains form an alternating ring which encloses part of the gamma chain. CF(1) is attached to CF(0) by a central stalk formed by the gamma and epsilon chains, while a peripheral stalk is formed by the delta and b chains.

The protein resides in the cell membrane. The catalysed reaction is ATP + H2O + 4 H(+)(in) = ADP + phosphate + 5 H(+)(out). Produces ATP from ADP in the presence of a proton gradient across the membrane. The catalytic sites are hosted primarily by the beta subunits. In Streptococcus agalactiae serotype III (strain NEM316), this protein is ATP synthase subunit beta.